Here is a 456-residue protein sequence, read N- to C-terminus: Phospholipase A1 member A (456 aa).

A signal peptide spans 1-24 (MCPGLWGTCFWLWGSLLWLSIGRS). Serine 166 (nucleophile) is an active-site residue. The active-site Charge relay system is aspartate 190. Cysteine 245 and cysteine 258 form a disulfide bridge. The Charge relay system role is filled by histidine 260. 2 cysteine pairs are disulfide-bonded: cysteine 282–cysteine 293 and cysteine 296–cysteine 304. A glycan (N-linked (GlcNAc...) asparagine) is linked at asparagine 365.

Belongs to the AB hydrolase superfamily. Lipase family.

It localises to the secreted. The enzyme catalyses a 1,2-diacyl-sn-glycero-3-phospho-L-serine + H2O = a 2-acyl-sn-glycero-3-phospho-L-serine + a fatty acid + H(+). It catalyses the reaction 1,2-di-(9Z)-octadecenoyl-sn-glycero-3-phospho-L-serine + H2O = 2-(9Z-octadecenoyl)-sn-glycero-3-phospho-L-serine + (9Z)-octadecenoate + H(+). It carries out the reaction 1-hexadecanoyl-2-(5Z,8Z,11Z,14Z-eicosatetraenoyl)-sn-glycero-3-phospho-L-serine + H2O = 2-(5Z,8Z,11Z,14Z)-eicosatetraenoyl-sn-glycero-3-phospho-L-serine + hexadecanoate + H(+). The catalysed reaction is a 1-acyl-sn-glycero-3-phospho-L-serine + H2O = sn-glycero-3-phospho-L-serine + a fatty acid + H(+). The enzyme catalyses 1-(9Z-octadecenoyl)-sn-glycero-3-phospho-L-serine + H2O = sn-glycero-3-phospho-L-serine + (9Z)-octadecenoate + H(+). In terms of biological role, hydrolyzes the ester bond of the acyl group attached at the sn-1 position of phosphatidylserines (phospholipase A1 activity) and 1-acyl-2-lysophosphatidylserines (lysophospholipase activity) in the pathway of phosphatidylserines acyl chain remodeling. Cleaves phosphatidylserines exposed on the outer leaflet of the plasma membrane of apoptotic cells producing 2-acyl-1-lysophosphatidylserines, which in turn enhance mast cell activation and histamine production. Has no activity toward other glycerophospholipids including phosphatidylcholines, phosphatidylethanolamines, phosphatidic acids or phosphatidylinositols, or glycerolipids such as triolein. In Rattus norvegicus (Rat), this protein is Phospholipase A1 member A.